The sequence spans 427 residues: Serine/arginine (SR)-type shuttling mRNA binding protein GBP2 (427 aa).

The interval 1–101 (MERELGMYGN…GRGGGRGRTL (101 aa)) is disordered. Residues 22–32 (RLSDDRDRYDD) are compositionally biased toward basic and acidic residues. Serine 24 is modified (phosphoserine). Residues 35–44 (DSSSNNGNGS) show a composition bias toward low complexity. Residues 50–60 (DRGSRFNDRYD) are compositionally biased toward basic and acidic residues. RRM domains follow at residues 122–198 (NSIF…QDNP) and 219–296 (FEVF…EGRF). Residue threonine 130 is modified to Phosphothreonine. A compositionally biased stretch (basic and acidic residues) spans 300 to 317 (KNNDRYNQRREDLEDTRG). The tract at residues 300-319 (KNNDRYNQRREDLEDTRGTE) is disordered. In terms of domain architecture, RRM 3 spans 349–426 (CFIYCSNLPF…CSLQISYARR (78 aa)).

Methylated by HMT1.

The protein resides in the cytoplasm. It localises to the nucleus. The protein localises to the chromosome. Its subcellular location is the telomere. It is found in the P-body. The protein resides in the stress granule. Its function is as follows. Binds to intron-containing transcripts and is involved in quality control for the export of spliced mRNAs from the nucleus. Binds to pre-mRNAs until splicing is completed or until faulty mRNAs are degraded. On correctly spliced mRNAs, GBP2 and HRB1 recruit MEX67 to allow nuclear export. On faulty mRNAs, GBP2 and HRB1 associate with the TRAMP complex that guides those pre-mRNAs to the exosome for degradation. Binds single-stranded telomeric sequences of the type (TG[1-3])n in vitro. Influences the localization of RAP1 in the nuclei. Involved in modulating telomere length. The protein is Serine/arginine (SR)-type shuttling mRNA binding protein GBP2 of Saccharomyces cerevisiae (strain ATCC 204508 / S288c) (Baker's yeast).